The primary structure comprises 371 residues: Beta sliding clamp (371 aa).

The protein belongs to the beta sliding clamp family. As to quaternary structure, forms a ring-shaped head-to-tail homodimer around DNA which binds and tethers DNA polymerases and other proteins to the DNA. The DNA replisome complex has a single clamp-loading complex (3 tau and 1 each of delta, delta', psi and chi subunits) which binds 3 Pol III cores (1 core on the leading strand and 2 on the lagging strand) each with a beta sliding clamp dimer. Additional proteins in the replisome are other copies of gamma, psi and chi, Ssb, DNA helicase and RNA primase.

It is found in the cytoplasm. Confers DNA tethering and processivity to DNA polymerases and other proteins. Acts as a clamp, forming a ring around DNA (a reaction catalyzed by the clamp-loading complex) which diffuses in an ATP-independent manner freely and bidirectionally along dsDNA. Initially characterized for its ability to contact the catalytic subunit of DNA polymerase III (Pol III), a complex, multichain enzyme responsible for most of the replicative synthesis in bacteria; Pol III exhibits 3'-5' exonuclease proofreading activity. The beta chain is required for initiation of replication as well as for processivity of DNA replication. The sequence is that of Beta sliding clamp (dnaN) from Treponema pallidum (strain Nichols).